Here is a 710-residue protein sequence, read N- to C-terminus: MLSQYMEEFEQEPFEVGEFIERLTWRTNNELQNSEDFHPVALHDTFIQTIKDLKILQEKQQSKCERLEESLRQEKESHAKKIAKLQERHQTAIDVFGQLDEKINSVAGKIMHLGEQLENVNTPRSRSVEAQKLLNFMSEFLAAGPVIVNDIFADAARLSEAADVIQKLYAISQDLPPGNFAESKRKIEKKYDEVERRLIEEFATAQKSEDIERMKTLAQILSQFKGYTQCVDAYIEQSQMQPYSGKDIFIGIVPLCKHHYEIIQKVFANPQQVMSKFILNIYQLKLHQYAMTKLEDKKDEEKYLRTLYELYSRTLKLSTDLQIYMSTIDDDLLQKLTQQIFIKHLAGYAEMETKCLTAKCSTELEKFYASKKHQKTATTKGFRRNMEVLIATRANINIAAIEDYGGETFLSEELAINMLQEAKASLKRCRLLSNETELPGNAIKLNDILLRFLMHEHVDYALELGLQAVPLAEGRVFPQLYFFDVVQKTNIIVHLLDKLCHTSVIPCVSNTPKYSDYVFKKRILMEQIETKLDQGLDRSISAVIGWVKVYLQYEQKKTDYKPETDVDTISSAACLQVVQNLQPVIVQIKKCVDGENLQNVLTEFGTRLHRVIYDHLQTMQFNTAGAMCAICDVNEYRKCIRELDSPLVTQLFDILHALCNLLLVKPQNLQEVCTGDTLNYLDKSVVRQFIQLRTDFRIIKNTNYLKGIIE.

Residues 44–96 (DTFIQTIKDLKILQEKQQSKCERLEESLRQEKESHAKKIAKLQERHQTAIDVF) are a coiled coil.

The protein belongs to the SEC10 family. In terms of assembly, the exocyst complex is composed of Sec3/Exoc1, Sec5/Exoc2, Sec6/Exoc3, Sec8/Exoc4, Sec10/Exoc5, Sec15/Exoc6, Exo70/Exoc7 and Exo84/Exoc8.

Its function is as follows. Component of the exocyst complex involved in the docking of exocytic vesicles with fusion sites on the plasma membrane. This is Exocyst complex component 5 from Drosophila melanogaster (Fruit fly).